We begin with the raw amino-acid sequence, 864 residues long: Leucine--tRNA ligase (864 aa).

The 'HIGH' region signature appears at 42-52 (PYPSGKLHMGH). The short motif at 624–628 (KMSKS) is the 'KMSKS' region element. Lysine 627 contributes to the ATP binding site.

This sequence belongs to the class-I aminoacyl-tRNA synthetase family.

It localises to the cytoplasm. It catalyses the reaction tRNA(Leu) + L-leucine + ATP = L-leucyl-tRNA(Leu) + AMP + diphosphate. The polypeptide is Leucine--tRNA ligase (Burkholderia thailandensis (strain ATCC 700388 / DSM 13276 / CCUG 48851 / CIP 106301 / E264)).